Consider the following 275-residue polypeptide: uncharacterized protein (275 aa).

Residues glutamate 71, aspartate 85, isoleucine 87, and aspartate 88 each coordinate Mg(2+). Position 71 (glutamate 71) interacts with substrate. Residue isoleucine 87–threonine 90 coordinates substrate. Helical transmembrane passes span isoleucine 87–valine 107, proline 112–glycine 132, and isoleucine 178–glycine 198. Aspartate 208 serves as a coordination point for Mg(2+). Aspartate 208 is a binding site for substrate.

This sequence belongs to the inositol monophosphatase superfamily.

It localises to the cell membrane. This is an uncharacterized protein from Sinorhizobium fredii (strain NBRC 101917 / NGR234).